We begin with the raw amino-acid sequence, 342 residues long: Holliday junction branch migration complex subunit RuvB (342 aa).

Residues 1 to 185 are large ATPase domain (RuvB-L); that stretch reads MTVKPLRDVT…FPIQERLEYY (185 aa). Residues Leu-24, Arg-25, Gly-66, Lys-69, Thr-70, Ser-71, 132–134, Arg-175, Tyr-185, and Arg-222 contribute to the ATP site; that span reads EDY. Thr-70 lines the Mg(2+) pocket. A small ATPAse domain (RuvB-S) region spans residues 186 to 256; the sequence is GPAELKEIAV…VVDRTLRRLE (71 aa). The interval 259–342 is head domain (RuvB-H); the sequence is ARGLDAMDRR…RSGGKQGSLV (84 aa). Residues Arg-314 and Arg-319 each coordinate DNA.

It belongs to the RuvB family. In terms of assembly, homohexamer. Forms an RuvA(8)-RuvB(12)-Holliday junction (HJ) complex. HJ DNA is sandwiched between 2 RuvA tetramers; dsDNA enters through RuvA and exits via RuvB. An RuvB hexamer assembles on each DNA strand where it exits the tetramer. Each RuvB hexamer is contacted by two RuvA subunits (via domain III) on 2 adjacent RuvB subunits; this complex drives branch migration. In the full resolvosome a probable DNA-RuvA(4)-RuvB(12)-RuvC(2) complex forms which resolves the HJ.

The protein resides in the cytoplasm. The catalysed reaction is ATP + H2O = ADP + phosphate + H(+). Its function is as follows. The RuvA-RuvB-RuvC complex processes Holliday junction (HJ) DNA during genetic recombination and DNA repair, while the RuvA-RuvB complex plays an important role in the rescue of blocked DNA replication forks via replication fork reversal (RFR). RuvA specifically binds to HJ cruciform DNA, conferring on it an open structure. The RuvB hexamer acts as an ATP-dependent pump, pulling dsDNA into and through the RuvAB complex. RuvB forms 2 homohexamers on either side of HJ DNA bound by 1 or 2 RuvA tetramers; 4 subunits per hexamer contact DNA at a time. Coordinated motions by a converter formed by DNA-disengaged RuvB subunits stimulates ATP hydrolysis and nucleotide exchange. Immobilization of the converter enables RuvB to convert the ATP-contained energy into a lever motion, pulling 2 nucleotides of DNA out of the RuvA tetramer per ATP hydrolyzed, thus driving DNA branch migration. The RuvB motors rotate together with the DNA substrate, which together with the progressing nucleotide cycle form the mechanistic basis for DNA recombination by continuous HJ branch migration. Branch migration allows RuvC to scan DNA until it finds its consensus sequence, where it cleaves and resolves cruciform DNA. The sequence is that of Holliday junction branch migration complex subunit RuvB from Anaeromyxobacter dehalogenans (strain 2CP-C).